Reading from the N-terminus, the 1010-residue chain is MSNTKVRIYDLSKELNLDNKDILDICDQLNIEYKSHSSTISEEDAQRIKAIAAKGLASSTSKNSTGQRESASPAEEKKQKILALHKHNRPETGEEGESYPGQAGSSAKPTLISPPRPPVKPLVAPPGRDEAAEKTPPTAAEMLSHSPSVKETPTETPLVPEAAPTLIAPPNRPSLTPKPRPETASGRPEPRSKNAPGSNDRPRGEKRERGESENAPSPERRVGLAKPEKPTLNRKPDGKSPKLAEPAREVRETVELKRPVRPGLPAKISATSEEETDTTKKSGVDGTEIDTDTGLLGADGPKKLKRPTMPPRMAKKSTWEEEEEEEKKAAKTAKTAGKNKRRTQALFEDDDDLESELSGLINTPSFTLSTARPPKPPTAKAAPPGTPTAVKVKRPSKPTAHTGSPKSERQEPQEEKRPESIVVTGSLTVRDLSELMKVPETEIIRTLFFKGMAVNITQTLDVDTIEMIARDFEIAVETPSTQSAAIKTTEMIDVSDWESLQRRPPVVTIMGHVDHGKTTLLDSIRKTKVAQGEAGGITQHIGAYHVDVEHNGKPEQIVFLDTPGHEAFTAMRARGARVTDIAVLVVAADDGVQPQTKEAISHARAAEVPIVVAINKVDKPSANPDRIKQELTEQGLVAEDWGGETIMVPVSALRGENLDNLLEMILLVAEVEELVANPDRLAKGTVIEANLDRTKGPVATLLVQNGTLRVGDSIVAGSVFGKIRAMIDDRGQKVEAATPSFAVEILGLSDVPAAGDEFDVYESEKEARSIADQRAIERRNTRLQQALSSRRVSLSTLSIQAQEGQLKELNLILKADVQGSVEAILGALKQLPQNEVQIRVLLASPGEITETDVDLAAASGAVVVGFNTTLASGARASADREGVDIRDYNIIYKLLDDIQGAMEGLLDPEEVEEHLGFAEVRAVFTVGRGAVAGCYVQSGKLVRNRFLRVRRGKEIVYQGVLDSLKRMKEDAREVATGFECGVGVSKFNDWKEGDIIEAYEMVMKRRTLSS.

Disordered regions lie at residues 54–350 and 364–420; these read KGLA…FEDD and PSFT…RPES. Positions 57–70 are enriched in polar residues; it reads ASSTSKNSTGQRES. Residues 112-124 are compositionally biased toward pro residues; it reads ISPPRPPVKPLVA. The span at 145–155 shows a compositional bias: polar residues; the sequence is HSPSVKETPTE. A compositionally biased stretch (basic and acidic residues) spans 200-258; sequence DRPRGEKRERGESENAPSPERRVGLAKPEKPTLNRKPDGKSPKLAEPAREVRETVELKR. Residues 378–389 show a composition bias toward low complexity; it reads TAKAAPPGTPTA. A compositionally biased stretch (basic and acidic residues) spans 406–419; sequence KSERQEPQEEKRPE. The tr-type G domain maps to 502-675; it reads RRPPVVTIMG…LLVAEVEELV (174 aa). Residues 511–518 form a G1 region; that stretch reads GHVDHGKT. Position 511-518 (511-518) interacts with GTP; it reads GHVDHGKT. The G2 stretch occupies residues 536–540; that stretch reads GITQH. The segment at 561 to 564 is G3; that stretch reads DTPG. Residues 561 to 565 and 615 to 618 contribute to the GTP site; these read DTPGH and NKVD. The tract at residues 615 to 618 is G4; it reads NKVD. The G5 stretch occupies residues 651 to 653; the sequence is SAL.

It belongs to the TRAFAC class translation factor GTPase superfamily. Classic translation factor GTPase family. IF-2 subfamily.

It localises to the cytoplasm. In terms of biological role, one of the essential components for the initiation of protein synthesis. Protects formylmethionyl-tRNA from spontaneous hydrolysis and promotes its binding to the 30S ribosomal subunits. Also involved in the hydrolysis of GTP during the formation of the 70S ribosomal complex. The chain is Translation initiation factor IF-2 from Microcystis aeruginosa (strain NIES-843 / IAM M-2473).